Consider the following 1305-residue polypeptide: Contactin-associated protein-like 5 (1305 aa).

Positions 1-24 (MDSVPRLTGVFTLLLSGLWHLGSS) are cleaved as a signal peptide. Residues 25 to 1236 (ATNYNCDDPL…PLTNAVRSDS (1212 aa)) are Extracellular-facing. An F5/8 type C domain is found at 30-174 (CDDPLASLLS…IGMRVEVYGC (145 aa)). Cys-30 and Cys-174 are disulfide-bonded. Laminin G-like domains are found at residues 180–360 (VADF…TFSC) and 367–544 (PITF…IDLC). Residues Asn-282, Asn-355, and Asn-496 are each glycosylated (N-linked (GlcNAc...) asparagine). An intrachain disulfide couples Cys-329 to Cys-360. 4 disulfide bridges follow: Cys-512-Cys-544, Cys-550-Cys-561, Cys-555-Cys-570, and Cys-572-Cys-582. Positions 546–583 (IKDRCLPNYCEHGGFCSQSWTTFYCNCSNTGYTGATCH) constitute an EGF-like 1 domain. The 207-residue stretch at 584-790 (NSLYEQSCEV…LRCYGDRHFW (207 aa)) folds into the Fibrinogen C-terminal domain. N-linked (GlcNAc...) asparagine glycosylation occurs at Asn-622. The 166-residue stretch at 791-956 (NAVSFYTEAS…KVTSGVRPGC (166 aa)) folds into the Laminin G-like 3 domain. 5 disulfides stabilise this stretch: Cys-929–Cys-956, Cys-960–Cys-973, Cys-967–Cys-982, Cys-984–Cys-994, and Cys-1163–Cys-1198. Positions 957-995 (PGHCSTYGSICHNGGKCVEKYSGYFCDCTNSPYEGPFCK) constitute an EGF-like 2 domain. The region spanning 1000-1198 (AVFEAGTSVT…VQGTLMESSC (199 aa)) is the Laminin G-like 4 domain. The chain crosses the membrane as a helical span at residues 1237–1257 (AVIGGVIAVVIFIIFSIIGIM). Residues 1258-1305 (TRFLYQHKQSHRTNQMKEKEYPENLDSSFRNDIDLQNTVSECKREYFI) are Cytoplasmic-facing.

This sequence belongs to the neurexin family.

Its subcellular location is the membrane. May play a role in the correct development and proper functioning of the peripheral and central nervous system and be involved in cell adhesion and intercellular communication. In Canis lupus familiaris (Dog), this protein is Contactin-associated protein-like 5 (CNTNAP5).